Here is a 24-residue protein sequence, read N- to C-terminus: 29 kDa outer membrane protein (24 aa).

The protein localises to the cell outer membrane. Its function is as follows. May be involved in transporting molecules across the outer membrane. The polypeptide is 29 kDa outer membrane protein (Acinetobacter baumannii).